A 152-amino-acid polypeptide reads, in one-letter code: SKP1-like protein 12 (152 aa).

Positions 94–152 (ILAANYLNIKSLFDLTCQTVADMIKGKTPEEIRSTFNIENDFTPEEEEAVRKENQWAFE) are interaction with the F-box domain of F-box proteins.

Belongs to the SKP1 family. Part of a SCF (SKP1-cullin-F-box) protein ligase complex. Interacts with ADO3/FKF1, COI1/FBL2, EBF1/FBL6, PP2B10, At3g61590 and At5g49610. As to expression, expressed in young seedlings, roots, leaves, floral stems, inflorescences, and siliques, with a slightly higher level in inflorescence than in other tissues.

It is found in the nucleus. It participates in protein modification; protein ubiquitination. In terms of biological role, involved in ubiquitination and subsequent proteasomal degradation of target proteins. Together with CUL1, RBX1 and a F-box protein, it forms a SCF E3 ubiquitin ligase complex. The functional specificity of this complex depends on the type of F-box protein. In the SCF complex, it serves as an adapter that links the F-box protein to CUL1. Plays a role during early flowers reproductive development. The sequence is that of SKP1-like protein 12 (ASK12) from Arabidopsis thaliana (Mouse-ear cress).